An 842-amino-acid polypeptide reads, in one-letter code: Protein translocase subunit SecA (842 aa).

ATP is bound by residues glutamine 85, 103–107 (GEGKT), and aspartate 493. 4 residues coordinate Zn(2+): cysteine 825, cysteine 827, cysteine 836, and histidine 837.

It belongs to the SecA family. In terms of assembly, monomer and homodimer. Part of the essential Sec protein translocation apparatus which comprises SecA, SecYEG and auxiliary proteins SecDF. Other proteins may also be involved. It depends on Zn(2+) as a cofactor.

It is found in the cell membrane. It localises to the cytoplasm. The catalysed reaction is ATP + H2O + cellular proteinSide 1 = ADP + phosphate + cellular proteinSide 2.. In terms of biological role, part of the Sec protein translocase complex. Interacts with the SecYEG preprotein conducting channel. Has a central role in coupling the hydrolysis of ATP to the transfer of proteins into and across the cell membrane, serving as an ATP-driven molecular motor driving the stepwise translocation of polypeptide chains across the membrane. This chain is Protein translocase subunit SecA, found in Streptococcus equi subsp. zooepidemicus (strain H70).